The sequence spans 201 residues: Nucleoid occlusion factor SlmA (201 aa).

Residues 14–75 (KERQQQVLEV…ALIERIEMTL (62 aa)) form the HTH tetR-type domain. Residues 38-57 (TTERLSKAVGVSEGALYRYF) constitute a DNA-binding region (H-T-H motif).

It belongs to the nucleoid occlusion factor SlmA family. As to quaternary structure, homodimer. Interacts with FtsZ.

It localises to the cytoplasm. It is found in the nucleoid. In terms of biological role, required for nucleoid occlusion (NO) phenomenon, which prevents Z-ring formation and cell division over the nucleoid. Acts as a DNA-associated cell division inhibitor that binds simultaneously chromosomal DNA and FtsZ, and disrupts the assembly of FtsZ polymers. SlmA-DNA-binding sequences (SBS) are dispersed on non-Ter regions of the chromosome, preventing FtsZ polymerization at these regions. The polypeptide is Nucleoid occlusion factor SlmA (Glaesserella parasuis serovar 5 (strain SH0165) (Haemophilus parasuis)).